The sequence spans 476 residues: Dihydrolipoyl dehydrogenase (476 aa).

FAD-binding positions include 36–45 (EHQERLGGVC), Lys54, and Ala117. Residues Cys45 and Cys50 are joined by a disulfide bond. Residues 182 to 186 (GGGII), Asp205, Val238, and 271 to 274 (AIGR) each bind NAD(+). FAD contacts are provided by Asp314 and Ala322. His446 serves as the catalytic Proton acceptor.

The protein belongs to the class-I pyridine nucleotide-disulfide oxidoreductase family. As to quaternary structure, homodimer. FAD is required as a cofactor.

The protein localises to the cytoplasm. The catalysed reaction is N(6)-[(R)-dihydrolipoyl]-L-lysyl-[protein] + NAD(+) = N(6)-[(R)-lipoyl]-L-lysyl-[protein] + NADH + H(+). In terms of biological role, lipoamide dehydrogenase is a component of the alpha-ketoacid dehydrogenase complexes. In Buchnera aphidicola subsp. Schizaphis graminum (strain Sg), this protein is Dihydrolipoyl dehydrogenase (lpdA).